We begin with the raw amino-acid sequence, 235 residues long: MAAKLPTVVLLASFAAVILSLAAPLLAGDPDMLQDICVADYKSLQGPLRVNGFPCKPEANVTAEDFFFPGLGKPADVYSGNPMGSAVTAATVERIPGLNTLGVSMARVDYAPWGGANPPHSHPRATEILFVADGLLEVGFVVATAAPASSRLITRVVPKGGVFVFPRGLLHYERSVGEKPAVAISAFDSQLPGTQAAADALFGSSSPAVPTDVLARAFQVDGGVVENIKSKFQHK.

A signal peptide spans 1 to 27 (MAAKLPTVVLLASFAAVILSLAAPLLA). Cys37 and Cys55 are oxidised to a cystine. A glycan (N-linked (GlcNAc...) asparagine) is linked at Asn60. The region spanning 69 to 226 (PGLGKPADVY…AFQVDGGVVE (158 aa)) is the Cupin type-1 domain. Mn(2+) is bound by residues His120, His122, Glu127, and His171.

The protein belongs to the germin family. As to quaternary structure, oligomer (believed to be a pentamer but probably hexamer).

The protein localises to the secreted. It is found in the extracellular space. Its subcellular location is the apoplast. In terms of biological role, may play a role in plant defense. Probably has no oxalate oxidase activity even if the active site is conserved. This Oryza sativa subsp. japonica (Rice) protein is Germin-like protein 1-4.